Consider the following 111-residue polypeptide: Large ribosomal subunit protein uL22 (111 aa).

This sequence belongs to the universal ribosomal protein uL22 family. As to quaternary structure, part of the 50S ribosomal subunit.

In terms of biological role, this protein binds specifically to 23S rRNA; its binding is stimulated by other ribosomal proteins, e.g. L4, L17, and L20. It is important during the early stages of 50S assembly. It makes multiple contacts with different domains of the 23S rRNA in the assembled 50S subunit and ribosome. The globular domain of the protein is located near the polypeptide exit tunnel on the outside of the subunit, while an extended beta-hairpin is found that lines the wall of the exit tunnel in the center of the 70S ribosome. This is Large ribosomal subunit protein uL22 from Clostridium acetobutylicum (strain ATCC 824 / DSM 792 / JCM 1419 / IAM 19013 / LMG 5710 / NBRC 13948 / NRRL B-527 / VKM B-1787 / 2291 / W).